Consider the following 134-residue polypeptide: Small ribosomal subunit protein uS17c (134 aa).

The N-terminal 37 residues, 1–37 (HHFFTGNGIGLNRFSNPISSPQTQTQTRSLPFPAIKA), are a transit peptide targeting the chloroplast. The tract at residues 106-134 (FLAVPAPSRKSKKAGSSGELGIPLQSQQE) is disordered.

The protein belongs to the universal ribosomal protein uS17 family. As to quaternary structure, part of the 30S ribosomal subunit.

It localises to the plastid. Its subcellular location is the chloroplast. Functionally, one of the primary rRNA binding proteins, it binds specifically to the 5'-end of 16S ribosomal RNA. The polypeptide is Small ribosomal subunit protein uS17c (RPS17) (Pisum sativum (Garden pea)).